The sequence spans 332 residues: T-cell surface glycoprotein CD1b2 (332 aa).

The signal sequence occupies residues 1 to 17; that stretch reads MLLLVLALLAVLFPAGD. Over 18–301 the chain is Extracellular; sequence TQDAFPEPIS…ILYWGNSSIG (284 aa). Residues N38, N75, and N146 are each glycosylated (N-linked (GlcNAc...) asparagine). Disulfide bonds link C120/C184, C149/C163, and C224/C279. In terms of domain architecture, Ig-like spans 185-295; it reads PRYLMSVLEA…LGGQDIILYW (111 aa). Residue N297 is glycosylated (N-linked (GlcNAc...) asparagine). The chain crosses the membrane as a helical span at residues 302–322; sequence WIILAVFVSCLIVLLFYVLWF. Residues 323–332 lie on the Cytoplasmic side of the membrane; it reads YKHWSYQDIL. Positions 328–331 match the Internalization signal motif; the sequence is YQDI.

In terms of assembly, heterodimer with B2M (beta-2-microglobulin). Interacts with saposin C.

It is found in the cell membrane. The protein localises to the endosome membrane. It localises to the lysosome membrane. Its function is as follows. Antigen-presenting protein that binds self and non-self lipid and glycolipid antigens and presents them to T-cell receptors on natural killer T-cells. The protein is T-cell surface glycoprotein CD1b2 (CD1B2) of Cavia porcellus (Guinea pig).